Consider the following 292-residue polypeptide: 4-hydroxy-tetrahydrodipicolinate synthase (292 aa).

Residue Thr-44 coordinates pyruvate. The active-site Proton donor/acceptor is the Tyr-132. The active-site Schiff-base intermediate with substrate is the Lys-160. Ile-202 contacts pyruvate.

It belongs to the DapA family. Homotetramer; dimer of dimers.

It localises to the cytoplasm. The enzyme catalyses L-aspartate 4-semialdehyde + pyruvate = (2S,4S)-4-hydroxy-2,3,4,5-tetrahydrodipicolinate + H2O + H(+). It functions in the pathway amino-acid biosynthesis; L-lysine biosynthesis via DAP pathway; (S)-tetrahydrodipicolinate from L-aspartate: step 3/4. Functionally, catalyzes the condensation of (S)-aspartate-beta-semialdehyde [(S)-ASA] and pyruvate to 4-hydroxy-tetrahydrodipicolinate (HTPA). The chain is 4-hydroxy-tetrahydrodipicolinate synthase from Magnetococcus marinus (strain ATCC BAA-1437 / JCM 17883 / MC-1).